A 49-amino-acid chain; its full sequence is Large ribosomal subunit protein bL33A (49 aa).

It belongs to the bacterial ribosomal protein bL33 family.

The sequence is that of Large ribosomal subunit protein bL33A from Lactobacillus delbrueckii subsp. bulgaricus (strain ATCC 11842 / DSM 20081 / BCRC 10696 / JCM 1002 / NBRC 13953 / NCIMB 11778 / NCTC 12712 / WDCM 00102 / Lb 14).